A 220-amino-acid chain; its full sequence is V-set and transmembrane domain-containing protein 2-like protein (220 aa).

An N-terminal signal peptide occupies residues 1 to 24 (MGAPLAAALGALHYLALFLQLGGA). In terms of domain architecture, Ig-like spans 41–158 (ALFTETPHDM…DGGRGVPRVL (118 aa)). Residues Cys62 and Cys142 are joined by a disulfide bond. The span at 165 to 180 (PAPPRAPRPRGQPPGE) shows a compositional bias: pro residues. The tract at residues 165–220 (PAPPRAPRPRGQPPGEEPGRGPTLLFLIILPGTGSGTPREAEPHQPHAGGCPARQS) is disordered.

This chain is V-set and transmembrane domain-containing protein 2-like protein (Vstm2l), found in Mus musculus (Mouse).